We begin with the raw amino-acid sequence, 355 residues long: Acidic fibroblast growth factor intracellular-binding protein B (355 aa).

As to quaternary structure, interacts with IER2.

It localises to the nucleus. Its subcellular location is the endomembrane system. Mediates with IER2 FGF-signaling in Kupffer's vesicle ciliogenesis and in the establishment of laterality in the embryo. May be involved in mitogenic function of FGF1. This Danio rerio (Zebrafish) protein is Acidic fibroblast growth factor intracellular-binding protein B.